A 46-amino-acid polypeptide reads, in one-letter code: Acetylajmalan esterase (46 aa).

A glycan (N-linked (GlcNAc...) asparagine) is linked at asparagine 39.

Belongs to the 'GDSL' lipolytic enzyme family.

It carries out the reaction 17-O-acetylajmaline + H2O = ajmaline + acetate + H(+). It catalyses the reaction 17-O-acetylnorajmaline + H2O = norajmaline + acetate + H(+). In terms of biological role, deacetylates 17-O-acetylajmaline and 17-O-acetylnorajmaline, but is inactive toward other acetylated alkaloids. The chain is Acetylajmalan esterase from Rauvolfia verticillata (Common devil-pepper).